Reading from the N-terminus, the 197-residue chain is Ribosome maturation factor RimM (197 aa).

Positions 92–164 (DEGWYEHELV…YILVTPPPGL (73 aa)) constitute a PRC barrel domain. Residues 167-197 (INVEDSGETSDAGESGPGEAEPGKAEAGDNA) form a disordered region. Low complexity predominate over residues 176–186 (SDAGESGPGEA). The span at 187–197 (EPGKAEAGDNA) shows a compositional bias: basic and acidic residues.

This sequence belongs to the RimM family. As to quaternary structure, binds ribosomal protein uS19.

The protein resides in the cytoplasm. Functionally, an accessory protein needed during the final step in the assembly of 30S ribosomal subunit, possibly for assembly of the head region. Essential for efficient processing of 16S rRNA. May be needed both before and after RbfA during the maturation of 16S rRNA. It has affinity for free ribosomal 30S subunits but not for 70S ribosomes. The sequence is that of Ribosome maturation factor RimM from Arthrobacter sp. (strain FB24).